The chain runs to 198 residues: Virion membrane protein A17 precursor homolog (198 aa).

At 1–55 (MDNNYLNYYNVFEEFDAGAGIKEKELFTEEQQLSFLPKKGLGNGGFDGVERLYSN) the chain is on the virion surface side. A helical membrane pass occupies residues 56–76 (IINNNDIKSLLALIMLVFAIN). Topologically, residues 77-145 (TNSLVALIFI…TSKISKGFKR (69 aa)) are intravirion. The chain crosses the membrane as a helical span at residues 146–166 (AIDVVLLVILGFYIVKIYGID). Residues 167–198 (RQISIPSRRYCRQMSGPSSLENLNAFQTHSNY) are Virion surface-facing. Tyrosine 198 carries the post-translational modification Phosphotyrosine.

The protein belongs to the chordopoxvirinae A17 family. Interacts (via N-terminus) with D13 scaffold; this interaction helps D13 to associate with membranes. Interacts with A14. Interacts with A27; this interaction allows A27 to be anchored in the mature virion (MV) membrane. Part of a complex composed of A17, A25, A26 and A27. The 22 kDa precursor is probably cleaved by the I7 protease during virus maturation. Post-translationally, phosphorylated on tyrosine and threonine. Its phosphorylation state is regulated by the F10 kinase and the H1 phosphatase. Phosphorylation by F10 kinase seems to be required to form the membranes associated with IV.

It localises to the virion membrane. Functionally, envelope protein which participates in virus morphogenesis. Needed for an early step in viral crescent membrane formation by interacting with D13 scaffold protein. Its interaction with D13 scaffold protein leads to the formation of rigid, crescent-shaped membranes that assemble around the cytoplasmic virus factory. Membrane anchor for the protein A27. A17-A27 virus envelope protein might be involved in fusion or attachment, and can further associate to A26. The chain is Virion membrane protein A17 precursor homolog from Fowlpox virus (strain NVSL) (FPV).